Reading from the N-terminus, the 113-residue chain is Large ribosomal subunit protein uL24 (113 aa).

Positions 48–70 (HRKRVTNDKGTSSGGLEKRESPM) are disordered.

The protein belongs to the universal ribosomal protein uL24 family. As to quaternary structure, part of the 50S ribosomal subunit.

One of two assembly initiator proteins, it binds directly to the 5'-end of the 23S rRNA, where it nucleates assembly of the 50S subunit. Its function is as follows. One of the proteins that surrounds the polypeptide exit tunnel on the outside of the subunit. In Tropheryma whipplei (strain TW08/27) (Whipple's bacillus), this protein is Large ribosomal subunit protein uL24.